Here is a 45-residue protein sequence, read N- to C-terminus: Large ribosomal subunit protein bL34 (45 aa).

The tract at residues E23–K45 is disordered. Residues L31–K45 show a composition bias toward basic residues.

The protein belongs to the bacterial ribosomal protein bL34 family.

This is Large ribosomal subunit protein bL34 from Elusimicrobium minutum (strain Pei191).